The chain runs to 752 residues: MSTKAVRSIELARELGVKPLEIVKFIEKIRNIQFKKGTTNIKVEPDEIDKIIQHFKKEAKLEKIKEKEEKPVELKKTEEIKELEEKKPITPKIIEEEIKEEEELQLPGRFRREISFEKIEKIKPKPVPTKIPPKKFEPKKWLDIKEQKKVKDKNKKEEPAVTPSTAPRKKSIKIEEGTTVKEFAELIGQKVPDVIKKFMELGYMPTINQPVDIDAAQLVAESFGIKVEFSQTQELDIIEEVEDSPELLQPRPPIVTVMGHVDHGKTSLLDAIRKTKVTEQEAGGITQHIGAYKVTLQGKDITFLDTPGHEAFTALRARGAKVTDIVVLVVAADDGVMPQTIEAINHAKAANVPIVVAVNKIDKPEANPQRVRTQLSDYGVIPEEWGGQNIFVDISAKKRIGIENLLEMIALQAEIMELKANPNKPARGTIIESRLDKGRGPVATVIVQNGTLRIGDAFVAGVTYGKVRAIIDDTGKRINEAPPSTPVEVVGFEEVPQAGDSFTVVEDERIARQIANTRAQKKRLAEMQKAQRLTLQDLYEKIKEGEVKELNLVIKGDVQGSVEALKKAVEDITHPEIKVKVIHTGVGGITESDVNLAATANAIIIGFNVRPETKAQDLAEQLGVDIKLYSIIYEVIDDVKKALQGMLEPEIKERVIGRAEVRAVFKISKIGTVAGCYVLNGTISRASDGVRVIRDNIVVYEGKISSLKRFKEDVREVQAGYECGITIENFNDIKEGDILENYVLEKVPVKGL.

Residues lysine 148–proline 159 show a composition bias toward basic and acidic residues. A disordered region spans residues lysine 148 to lysine 170. Residues proline 250–lysine 419 form the tr-type G domain. The G1 stretch occupies residues glycine 259–threonine 266. Residue glycine 259–threonine 266 coordinates GTP. The segment at glycine 284–histidine 288 is G2. A G3 region spans residues aspartate 305–glycine 308. GTP contacts are provided by residues aspartate 305 to histidine 309 and asparagine 359 to aspartate 362. The G4 stretch occupies residues asparagine 359–aspartate 362. Positions serine 395–lysine 397 are G5.

Belongs to the TRAFAC class translation factor GTPase superfamily. Classic translation factor GTPase family. IF-2 subfamily.

The protein resides in the cytoplasm. Its function is as follows. One of the essential components for the initiation of protein synthesis. Protects formylmethionyl-tRNA from spontaneous hydrolysis and promotes its binding to the 30S ribosomal subunits. Also involved in the hydrolysis of GTP during the formation of the 70S ribosomal complex. This is Translation initiation factor IF-2 from Thermodesulfovibrio yellowstonii (strain ATCC 51303 / DSM 11347 / YP87).